The following is a 255-amino-acid chain: Aliphatic sulfonates import ATP-binding protein SsuB (255 aa).

One can recognise an ABC transporter domain in the interval 12-233 (LLLNAVSKHY…RLGSVRLAEL (222 aa)). 44 to 51 (GRSGGGKS) provides a ligand contact to ATP.

This sequence belongs to the ABC transporter superfamily. Aliphatic sulfonates importer (TC 3.A.1.17.2) family. In terms of assembly, the complex is composed of two ATP-binding proteins (SsuB), two transmembrane proteins (SsuC) and a solute-binding protein (SsuA).

The protein resides in the cell inner membrane. The catalysed reaction is ATP + H2O + aliphatic sulfonate-[sulfonate-binding protein]Side 1 = ADP + phosphate + aliphatic sulfonateSide 2 + [sulfonate-binding protein]Side 1.. In terms of biological role, part of the ABC transporter complex SsuABC involved in aliphatic sulfonates import. Responsible for energy coupling to the transport system. The sequence is that of Aliphatic sulfonates import ATP-binding protein SsuB from Shigella sonnei (strain Ss046).